A 98-amino-acid chain; its full sequence is MLEFLLRFFGRDTASSKKVAKERLRLVLVHDRAGVSPHLLESLKNDLIKVISEYLDIDTDGLEVSLTHENDAVALVANIPILRVKRTFKSVQEPAFKV.

Belongs to the MinE family.

Functionally, prevents the cell division inhibition by proteins MinC and MinD at internal division sites while permitting inhibition at polar sites. This ensures cell division at the proper site by restricting the formation of a division septum at the midpoint of the long axis of the cell. The chain is Cell division topological specificity factor from Moorella thermoacetica (strain ATCC 39073 / JCM 9320).